A 94-amino-acid chain; its full sequence is Protein RESPONSE TO LOW SULFUR 1 (94 aa).

The stretch at 8-35 forms a coiled coil; the sequence is VTVAAEEMDELRRRNIELSREVAEMKTE.

The protein is Protein RESPONSE TO LOW SULFUR 1 of Arabidopsis thaliana (Mouse-ear cress).